The following is a 264-amino-acid chain: tRNA pseudouridine synthase A (264 aa).

Aspartate 51 acts as the Nucleophile in catalysis. Tyrosine 109 contributes to the substrate binding site.

It belongs to the tRNA pseudouridine synthase TruA family. In terms of assembly, homodimer.

The catalysed reaction is uridine(38/39/40) in tRNA = pseudouridine(38/39/40) in tRNA. Formation of pseudouridine at positions 38, 39 and 40 in the anticodon stem and loop of transfer RNAs. The polypeptide is tRNA pseudouridine synthase A (Vibrio cholerae serotype O1 (strain ATCC 39541 / Classical Ogawa 395 / O395)).